A 251-amino-acid chain; its full sequence is CDP-diacylglycerol pyrophosphatase (251 aa).

A helical membrane pass occupies residues 4–24; that stretch reads AGLLFLVMIVIAVVAAGIGYW.

The protein belongs to the Cdh family.

The protein resides in the cell inner membrane. It carries out the reaction a CDP-1,2-diacyl-sn-glycerol + H2O = a 1,2-diacyl-sn-glycero-3-phosphate + CMP + 2 H(+). It participates in phospholipid metabolism; CDP-diacylglycerol degradation; phosphatidate from CDP-diacylglycerol: step 1/1. The protein is CDP-diacylglycerol pyrophosphatase of Shigella flexneri.